A 512-amino-acid chain; its full sequence is Histidine ammonia-lyase (512 aa).

The 5-imidazolinone (Ala-Gly) cross-link spans 142 to 144 (ASG). Position 143 is a 2,3-didehydroalanine (Ser) (Ser-143).

It belongs to the PAL/histidase family. In terms of processing, contains an active site 4-methylidene-imidazol-5-one (MIO), which is formed autocatalytically by cyclization and dehydration of residues Ala-Ser-Gly.

Its subcellular location is the cytoplasm. The catalysed reaction is L-histidine = trans-urocanate + NH4(+). Its pathway is amino-acid degradation; L-histidine degradation into L-glutamate; N-formimidoyl-L-glutamate from L-histidine: step 1/3. This is Histidine ammonia-lyase from Bartonella quintana (strain Toulouse) (Rochalimaea quintana).